The following is a 104-amino-acid chain: Replication restart protein PriB (104 aa).

Residues 2-101 (TNRLVLSGTV…LHAEQIELID (100 aa)) form the SSB domain. The cysteines at positions 48 and 80 are disulfide-linked. The short motif at 82–89 (KAKNGLSK) is the L45 loop element.

It belongs to the PriB family. Homodimer. Primosome assembly occurs via a 'hand-off' mechanism. PriA binds to replication forks, subsequently PriB then DnaT bind; DnaT then displaces ssDNA to generate the helicase loading substrate, which allows DnaC to load helicase DnaB onto the fork. ssDNA is displaced from the PriB-ssDNA complex by DnaT. In a PriA-PriB-replication fork structure, movement of the PriA CRR domain exposes a surface to which PriB binds and contacts ssDNA emerging from the PriA pore. Binds PriA; binding is improved in the presence of ssDNA. Weakly binds DnaT; binding is improved in the presence of ssDNA; as DnaT levels increase PriB dissociates from ssDNA. Component of the replication restart primosome, which is composed of PriA, PriB, PriC, DnaB and DnaT; DnaG primase associates transiently with this complex. Component of the preprimosomal complex composed of one monomer of PriC and DnaT, two monomers of PriA, two dimers of PriB and one hexamer of DnaB. Post-translationally, an intersubunit disulfide bond is seen in some crystals.

Involved in the restart of stalled replication forks, which reloads the replicative helicase (DnaB) on sites other than the origin of replication; the PriA-PriB pathway is the major replication restart pathway. There are several restart pathways, the PriA-PriB pathway is subdivided into 2 distinct pathways. priB and priC have redundant roles in the cell. During primosome assembly it facilitates complex formation between PriA and DnaT on DNA; stabilizes PriA on DNA, presumably by preventing or inhibiting PriA DNA translocation activity. Forms a branched DNA-PriA-PriB complex when the lagging strand is single-stranded (ss)DNA. Binds ssDNA in the presence and absence of ssDNA DNA-binding protein (SSB), does not bind branched structures. DNA binding, forming spiral filaments on ssDNA, is cooperative. Stimulates the helicase activity of PriA. The homodimer binds 12 nucleotides of ssDNA. Binds homo-pyrimidine tracts better than homo-purine tracts. Functionally, genetic interactions among priB, dam, lexA, nagC, polA, rdgB, rdgB, rep and uup link the PriA-PriB replication restart pathway to DNA double-strand break repair. The protein is Replication restart protein PriB of Escherichia coli (strain K12).